The primary structure comprises 246 residues: 3-deoxy-manno-octulosonate cytidylyltransferase (246 aa).

It belongs to the KdsB family.

The protein resides in the cytoplasm. The catalysed reaction is 3-deoxy-alpha-D-manno-oct-2-ulosonate + CTP = CMP-3-deoxy-beta-D-manno-octulosonate + diphosphate. Its pathway is nucleotide-sugar biosynthesis; CMP-3-deoxy-D-manno-octulosonate biosynthesis; CMP-3-deoxy-D-manno-octulosonate from 3-deoxy-D-manno-octulosonate and CTP: step 1/1. It participates in bacterial outer membrane biogenesis; lipopolysaccharide biosynthesis. In terms of biological role, activates KDO (a required 8-carbon sugar) for incorporation into bacterial lipopolysaccharide in Gram-negative bacteria. In Bradyrhizobium sp. (strain BTAi1 / ATCC BAA-1182), this protein is 3-deoxy-manno-octulosonate cytidylyltransferase.